Consider the following 358-residue polypeptide: Phospho-N-acetylmuramoyl-pentapeptide-transferase (358 aa).

The next 9 membrane-spanning stretches (helical) occupy residues 13 to 35, 81 to 101, 106 to 126, 142 to 162, 171 to 191, 201 to 221, 228 to 248, 268 to 290, and 336 to 356; these read LLILNTFALIATSYLFNNFIFIG, MGGVFMVIPFLIFLLIININL, LFLLLLTIFGFFITGFVDDFL, FFLQSIIAIIFIFLAYEKDLI, SWQINMNIFTLPISFLVLVGI, LDGLAAGCSGIVFYGLGTEIL, LIIFSILCYSMSGICLGFLKY, ILGSIALLTNSVFTLSIFSGIFI, and IVENFWKINILLVILGIVLKI.

Belongs to the glycosyltransferase 4 family. MraY subfamily. It depends on Mg(2+) as a cofactor.

The protein localises to the cell inner membrane. The enzyme catalyses UDP-N-acetyl-alpha-D-muramoyl-L-alanyl-gamma-D-glutamyl-meso-2,6-diaminopimeloyl-D-alanyl-D-alanine + di-trans,octa-cis-undecaprenyl phosphate = di-trans,octa-cis-undecaprenyl diphospho-N-acetyl-alpha-D-muramoyl-L-alanyl-D-glutamyl-meso-2,6-diaminopimeloyl-D-alanyl-D-alanine + UMP. The protein operates within cell wall biogenesis; peptidoglycan biosynthesis. In terms of biological role, catalyzes the initial step of the lipid cycle reactions in the biosynthesis of the cell wall peptidoglycan: transfers peptidoglycan precursor phospho-MurNAc-pentapeptide from UDP-MurNAc-pentapeptide onto the lipid carrier undecaprenyl phosphate, yielding undecaprenyl-pyrophosphoryl-MurNAc-pentapeptide, known as lipid I. The chain is Phospho-N-acetylmuramoyl-pentapeptide-transferase from Prochlorococcus marinus (strain MIT 9312).